Here is a 478-residue protein sequence, read N- to C-terminus: Sphingomyelin synthase-related protein 1 (478 aa).

The segment covering 1–22 has biased composition (low complexity); it reads MPAGSRAGSRLRSGSLPRPSRL. Residues 1-65 form a disordered region; the sequence is MPAGSRAGSR…TAEEVEKEMA (65 aa). Residues 75–141 enclose the SAM domain; that stretch reads WTTKHVAVWL…MLSVRKLQKI (67 aa). A run of 6 helical transmembrane segments spans residues 216–236, 264–284, 295–315, 341–361, 385–405, and 410–430; these read ILSC…MVIV, FSMT…VLLL, LCSL…VTSL, AIWS…DYMF, FLHT…LAAH, and IDVF…HTLA. Topologically, residues 431–478 are cytoplasmic; sequence NTRAYHQSRRARIWFPMFSFFECNVNGTVPNEYCWPFSKPAIMKRLIG.

Belongs to the sphingomyelin synthase family. As to expression, expressed ubiquitously with highest levels in macrophages and testis.

Its subcellular location is the endoplasmic reticulum membrane. It catalyses the reaction an N-acylsphing-4-enine + a 1,2-diacyl-sn-glycero-3-phosphoethanolamine = an N-acylsphing-4-enine 1-phosphoethanolamine + a 1,2-diacyl-sn-glycerol. The enzyme catalyses an N-acylsphinganine + a 1,2-diacyl-sn-glycero-3-phosphoethanolamine = an N-acylsphinganine-1-phosphoethanolamine + a 1,2-diacyl-sn-glycerol. It carries out the reaction an N-acyl-(4R)-4-hydroxysphinganine + a 1,2-diacyl-sn-glycero-3-phosphoethanolamine = an N-acyl-(4R)-4-hydroxysphinganine-1-phosphoethanolamine + a 1,2-diacyl-sn-glycerol. The catalysed reaction is N-hexadecanoylsphinganine + a 1,2-diacyl-sn-glycero-3-phosphoethanolamine = N-hexadecanoyl-sphinganine-1-phosphoethanolamine + a 1,2-diacyl-sn-glycerol. It catalyses the reaction N-hexadecanoyl-(4R)-hydroxysphinganine + a 1,2-diacyl-sn-glycero-3-phosphoethanolamine = N-hexadecanoyl-(4R)-hydroxysphinganine-1-phosphoethanolamine + a 1,2-diacyl-sn-glycerol. It participates in sphingolipid metabolism. Its function is as follows. Synthesizes sphingolipids through transfer of a phosphatidyl head group from a glycerophospholipid on to the primary hydroxyl of a ceramide in the lumen of the endoplasmic reticulum. Catalyzes the synthesis of ceramide phosphoethanolamines (CPEs) (such as N-acylsphing-4-enine 1-phosphoethanolamine) by transferring phosphoethanolamine head group, which is smaller and more hydrophilic than the phosphocholine (PC) headgroup transferred in the canonical sphingomyelin synthesis (SMS) reaction by SMS1 or SMS2, from a phosphatidylethanolamine (1,2-diacyl-sn-glycero-3-phosphoethanolamine, PE) to a ceramide (such as N-acylsphing-4-enine). The larger PC prevents an efficient fit in the enzyme's catalytic pocket, leading to little or no SMS activity. In vitro, in the absence of ceramide, it has PLC activity with preference for phosphatidylinositol and phosphatidic acid, but also hydrolyzes phosphatidylethanolamine. This Mus musculus (Mouse) protein is Sphingomyelin synthase-related protein 1.